We begin with the raw amino-acid sequence, 119 residues long: Phytosulfokines 2 (119 aa).

The N-terminal stretch at 1 to 34 is a signal peptide; the sequence is MSTTRGVSSSSAAAALALLLLFALCFFSFHFAAA. Positions 35–109 are excised as a propeptide; sequence ARAVPRDEHQ…RRLLSDAHLD (75 aa). Tyr-110 and Tyr-112 each carry sulfotyrosine. A propeptide spanning residues 115–119 is cleaved from the precursor; it reads HKNKP.

It belongs to the phytosulfokine family. Post-translationally, sulfation is important for activity and for the binding to a putative membrane receptor. PSK-alpha is produced by endopeptidase digestion. PSK-beta is produced from PSK-alpha by exopeptidase digestion.

Its subcellular location is the secreted. Promotes plant cell differentiation, organogenesis and somatic embryogenesis as well as cell proliferation. The polypeptide is Phytosulfokines 2 (PSK2) (Oryza sativa subsp. japonica (Rice)).